The following is a 750-amino-acid chain: Signal transducer and activator of transcription 1-alpha/beta (750 aa).

N-acetylserine is present on serine 2. 6 positions are modified to N6-methyllysine: lysine 114, lysine 175, lysine 296, lysine 366, lysine 525, and lysine 637. A coiled-coil region spans residues 136–317 (LDKQKELDSK…LFQQLIQSSF (182 aa)). The 98-residue stretch at 573 to 670 (WNDGCIMGFI…ENPLKYLYPN (98 aa)) folds into the SH2 domain. Position 657 is an ADP-ribosyl glutamic acid; by PARP14 (glutamate 657). Lysine 665 is subject to N6-methyllysine. Residue tyrosine 701 is modified to Phosphotyrosine; by JAK1, JAK2 or TYK2. Residue lysine 703 forms a Glycyl lysine isopeptide (Lys-Gly) (interchain with G-Cter in SUMO1); alternate linkage. A Glycyl lysine isopeptide (Lys-Gly) (interchain with G-Cter in SUMO2); alternate cross-link involves residue lysine 703. The residue at position 705 (glutamate 705) is an ADP-ribosyl glutamic acid; by PARP14. Residue serine 708 is modified to Phosphoserine; by IKKE. Serine 727 carries the post-translational modification Phosphoserine; by CAMK2 and MAPK14. Serine 745 carries the post-translational modification Phosphoserine; by IKKE. Threonine 749 is modified (phosphothreonine; by IKKB).

The protein belongs to the transcription factor STAT family. In terms of assembly, isoform alpha homodimerizes upon IFN-gamma induced phosphorylation. Heterodimer with STAT2 upon IFN-alpha/beta induced phosphorylation. The heterodimer STAT1:STAT2 forms the interferon-stimulated gene factor 3 complex (ISGF3) with IRF9. Interacts (phosphorylated at Ser-727) with PIAS1; the interaction results in release of STAT1 from its target gene. Interacts with IFNAR1; the interaction requires the phosphorylation of IFNAR1 at 'Tyr-466'. Interacts with IFNAR2. Found in a complex with NMI and CREBBP/CBP. Interacts with NMI which is required for CREBBP/CBP recruitment to the complex. Interacts with PTK2/FAK1. Interacts with SRC. Interacts with ERBB4 (phosphorylated). Interacts with PARP9 and DTX3L independently of IFN-beta or IFN-gamma-mediated STAT1 'Tyr-701' phosphorylation. Interacts with histone acetyltransferase EP300/p300 in response to INF-gamma stimulation. Independently of its phosphorylation status, interacts with OTOP1. Interacts with IFNGR1. Interacts with STAT4. As to quaternary structure, (Microbial infection) Interacts with Sendai virus C', C, Y1 and Y2 proteins, preventing activation of ISRE and GAS promoter. (Microbial infection) Interacts with Nipah virus P, V and W proteins preventing activation of ISRE and GAS promoter. In terms of assembly, (Microbial infection) Interacts with Rabies virus phosphoprotein preventing activation of ISRE and GAS promoter. As to quaternary structure, (Microbial infection) Interacts with HCV core protein; the interaction results in STAT1 degradation. (Microbial infection) Interacts with ebolavirus protein VP24. In terms of assembly, (Microbial infection) Interacts with Epstein-Barr virus (EBV) tegument protein BGLF2; this interaction leads to STAT1 dephosphorylation and inhibition. As to quaternary structure, (Microbial infection) Interacts (via N-terminus) with measles V protein; this interaction inhibits STAT1 phosphorylation by Jak1 and thereby the type I interferon signaling pathway. In terms of processing, deubiquitinated by USP13; leading to STAT1 stabilization and positive regulation of type I and type II IFN signalings. Post-translationally, phosphorylated on tyrosine and serine residues in response to a variety of cytokines/growth hormones including IFN-alpha, IFN-gamma, PDGF and EGF. Activated KIT promotes phosphorylation on tyrosine residues and subsequent translocation to the nucleus. Upon EGF stimulation, phosphorylation on Tyr-701 (lacking in beta form) by JAK1, JAK2 or TYK2 promotes dimerization and subsequent translocation to the nucleus. Growth hormone (GH) activates STAT1 signaling only via JAK2. Tyrosine phosphorylated in response to constitutively activated FGFR1, FGFR2, FGFR3 and FGFR4. Phosphorylation on Ser-727 by several kinases including MAPK14, ERK1/2, CAMK2/CAMKII and CK2 in response to IFN-gamma stimulation, is required for maximal transcriptional activity. Phosphorylated on Ser-727 by CAMK2/CAMKII in response to IFN-gamma stimulation and calcium mobilization, promoting activity. Phosphorylated by CAMK2/CAMKII in response to IFN-beta stimulation and calcium mobilization in epithelial cells, promoting activity. Phosphorylation on Ser-727 promotes sumoylation though increasing interaction with PIAS. Phosphorylation on Ser-727 by PRKCD induces apoptosis in response to DNA-damaging agents. Phosphorylated on tyrosine residues when PTK2/FAK1 is activated; most likely this is catalyzed by a SRC family kinase. Dephosphorylation on tyrosine residues by PTPN2 negatively regulates interferon-mediated signaling. Upon viral infection or IFN induction, phosphorylation on Ser-708 occurs much later than phosphorylation on Tyr-701 and is required for the binding of ISGF3 on the ISREs of a subset of IFN-stimulated genes IKBKE-dependent. Phosphorylation at Tyr-701 and Ser-708 are mutually exclusive, phosphorylation at Ser-708 requires previous dephosphorylation of Tyr-701. Phosphorylation at Thr-749 by IKBKB/IKKB promotes transcriptional activation of ARID5A and IL12B by STAT1. Phosphorylation at Thr-749 restricts interferon signaling and anti-inflammatory responses and promotes innate inflammatory responses. Sumoylated with SUMO1, SUMO2 and SUMO3. Sumoylation is enhanced by IFN-gamma-induced phosphorylation on Ser-727, and by interaction with PIAS proteins. Enhances the transactivation activity. In terms of processing, ISGylated. Post-translationally, mono-ADP-ribosylated at Glu-657 and Glu-705 by PARP14; ADP-ribosylation prevents phosphorylation at Tyr-701. However, the role of ADP-ribosylation in the prevention of phosphorylation has been called into question and the lack of phosphorylation may be due to sumoylation of Lys-703. Monomethylated at Lys-525 by SETD2; monomethylation is necessary for phosphorylation at Tyr-701, translocation into the nucleus and activation of the antiviral defense. In terms of processing, (Microbial infection) Ubiquitinated by Herpes simplex virus 2 E3 ubiquitin ligase ICP22.

It localises to the cytoplasm. It is found in the nucleus. In terms of biological role, signal transducer and transcription activator that mediates cellular responses to interferons (IFNs), cytokine KITLG/SCF and other cytokines and other growth factors. Following type I IFN (IFN-alpha and IFN-beta) binding to cell surface receptors, signaling via protein kinases leads to activation of Jak kinases (TYK2 and JAK1) and to tyrosine phosphorylation of STAT1 and STAT2. The phosphorylated STATs dimerize and associate with ISGF3G/IRF-9 to form a complex termed ISGF3 transcription factor, that enters the nucleus. ISGF3 binds to the IFN stimulated response element (ISRE) to activate the transcription of IFN-stimulated genes (ISG), which drive the cell in an antiviral state. In response to type II IFN (IFN-gamma), STAT1 is tyrosine- and serine-phosphorylated. It then forms a homodimer termed IFN-gamma-activated factor (GAF), migrates into the nucleus and binds to the IFN gamma activated sequence (GAS) to drive the expression of the target genes, inducing a cellular antiviral state. Becomes activated in response to KITLG/SCF and KIT signaling. May mediate cellular responses to activated FGFR1, FGFR2, FGFR3 and FGFR4. Following bacterial lipopolysaccharide (LPS)-induced TLR4 endocytosis, phosphorylated at Thr-749 by IKBKB which promotes binding of STAT1 to the 5'-TTTGAGGC-3' sequence in the ARID5A promoter, resulting in transcriptional activation of ARID5A and subsequent ARID5A-mediated stabilization of IL6. Phosphorylation at Thr-749 also promotes binding of STAT1 to the 5'-TTTGAGTC-3' sequence in the IL12B promoter and activation of IL12B transcription. Involved in food tolerance in small intestine: associates with the Gasdermin-D, p13 cleavage product (13 kDa GSDMD) and promotes transcription of CIITA, inducing type 1 regulatory T (Tr1) cells in upper small intestine. This chain is Signal transducer and activator of transcription 1-alpha/beta (STAT1), found in Homo sapiens (Human).